A 38-amino-acid chain; its full sequence is Potassium channel toxin alpha-KTx 2.15 (38 aa).

3 disulfide bridges follow: C7/C29, C13/C34, and C17/C36.

The protein belongs to the short scorpion toxin superfamily. Potassium channel inhibitor family. Alpha-KTx 02 subfamily. In terms of tissue distribution, expressed by the venom gland.

It is found in the secreted. In terms of biological role, blocks human voltage-gated potassium channels Kv1.2/KCNA2 (IC(50)=0.3 nM), Kv1.3/KCNA3 (IC(50)=8.3 nM) and Shaker IR (with inactivation domain removed) (IC(50)=12 nM) and blocks intermediate conductance calcium-activated potassium channel KCa3.1/KCNN4 (IC(50)=6.4 nM). The chain is Potassium channel toxin alpha-KTx 2.15 from Centruroides tecomanus (Scorpion).